Consider the following 196-residue polypeptide: Large ribosomal subunit protein uL10 (196 aa).

Residues 163–196 (GAPAAAEAPAAEEAPAAEAAETEAPAEAAATEEN) form a disordered region. Residues 164–196 (APAAAEAPAAEEAPAAEAAETEAPAEAAATEEN) are compositionally biased toward low complexity.

The protein belongs to the universal ribosomal protein uL10 family. In terms of assembly, part of the ribosomal stalk of the 50S ribosomal subunit. The N-terminus interacts with L11 and the large rRNA to form the base of the stalk. The C-terminus forms an elongated spine to which L12 dimers bind in a sequential fashion forming a multimeric L10(L12)X complex.

Its function is as follows. Forms part of the ribosomal stalk, playing a central role in the interaction of the ribosome with GTP-bound translation factors. The chain is Large ribosomal subunit protein uL10 from Arthrobacter sp. (strain FB24).